Here is a 126-residue protein sequence, read N- to C-terminus: Small ribosomal subunit protein uS13 (126 aa).

Positions 99-126 (LRGQSTKNNARTRKGKKKTVANKKKATK) are disordered. The segment covering 108-126 (ARTRKGKKKTVANKKKATK) has biased composition (basic residues).

The protein belongs to the universal ribosomal protein uS13 family. As to quaternary structure, part of the 30S ribosomal subunit. Forms a loose heterodimer with protein S19. Forms two bridges to the 50S subunit in the 70S ribosome.

Its function is as follows. Located at the top of the head of the 30S subunit, it contacts several helices of the 16S rRNA. In the 70S ribosome it contacts the 23S rRNA (bridge B1a) and protein L5 of the 50S subunit (bridge B1b), connecting the 2 subunits; these bridges are implicated in subunit movement. Contacts the tRNAs in the A and P-sites. The protein is Small ribosomal subunit protein uS13 of Porphyromonas gingivalis (strain ATCC 33277 / DSM 20709 / CIP 103683 / JCM 12257 / NCTC 11834 / 2561).